The following is a 312-amino-acid chain: Malate dehydrogenase (312 aa).

Residues 7–13 (GAAGGIG) and D34 contribute to the NAD(+) site. Residues R81 and R87 each coordinate substrate. NAD(+) is bound by residues N94 and 117–119 (ITN). Substrate is bound by residues N119 and R153. H177 (proton acceptor) is an active-site residue. Residue M227 participates in NAD(+) binding.

The protein belongs to the LDH/MDH superfamily. MDH type 1 family. Homodimer.

The enzyme catalyses (S)-malate + NAD(+) = oxaloacetate + NADH + H(+). Functionally, catalyzes the reversible oxidation of malate to oxaloacetate. The protein is Malate dehydrogenase of Shigella dysenteriae serotype 1 (strain Sd197).